Reading from the N-terminus, the 694-residue chain is DNA-binding protein RFX2 (694 aa).

The RFX-type winged-helix DNA-binding region spans 174–249 (HLQWLLDNYE…YHYYGIRLKP (76 aa)). Disordered regions lie at residues 268 to 309 (QPIH…SQHH) and 659 to 694 (DDVS…MQEM). Positions 288-299 (NTANSSQHTSPE) are enriched in polar residues. The segment covering 300-309 (QSVAAQSQHH) has biased composition (low complexity).

It belongs to the RFX family. In terms of assembly, homodimer. Heterodimer; heterodimerizes with other rfx proteins.

The protein localises to the nucleus. It is found in the cytoplasm. Transcription factor that acts as a key regulator of ciliogenesis. Specifically regulates expression of genes required for cilium assembly and function. Recognizes and binds the X-box, a regulatory motif with DNA sequence 5'-GTNRCC(0-3N)RGYAAC-3' present on promoters. Required for neural tube closure and neural ciliogenesis. This is DNA-binding protein RFX2 (rfx2) from Xenopus tropicalis (Western clawed frog).